A 367-amino-acid chain; its full sequence is Zinc finger CCCH domain-containing protein 56 (367 aa).

The tract at residues 38–80 (YNSQWNADGGGGGSSRAGSEQPPPGKKSRGGGGGEGGGNTSKS) is disordered. The segment covering 67 to 76 (GGGGGEGGGN) has biased composition (gly residues). 3 C3H1-type zinc fingers span residues 87–114 (FFKT…HGME), 169–197 (AYKG…HDEQ), and 245–273 (NWKT…HGAA).

The chain is Zinc finger CCCH domain-containing protein 56 from Oryza sativa subsp. japonica (Rice).